A 225-amino-acid chain; its full sequence is uncharacterized protein (225 aa).

3 residues coordinate a divalent metal cation: glutamate 69, glutamate 71, and aspartate 100.

This sequence belongs to the FAH family.

This is an uncharacterized protein from Pyrococcus abyssi (strain GE5 / Orsay).